The sequence spans 189 residues: dCTP deaminase, dUMP-forming (189 aa).

DCTP-binding positions include 101–106 (KSSLGR), Asp119, 127–129 (TLE), Gln148, Tyr162, Lys170, and Gln174. The Proton donor/acceptor role is filled by Glu129. The disordered stretch occupies residues 163–189 (GSGKLGSKYQGQRGPTPSKAYLNFPNK).

It belongs to the dCTP deaminase family. Homotrimer.

The enzyme catalyses dCTP + 2 H2O = dUMP + NH4(+) + diphosphate. It participates in pyrimidine metabolism; dUMP biosynthesis; dUMP from dCTP: step 1/1. Its function is as follows. Bifunctional enzyme that catalyzes both the deamination of dCTP to dUTP and the hydrolysis of dUTP to dUMP without releasing the toxic dUTP intermediate. The chain is dCTP deaminase, dUMP-forming from Corynebacterium glutamicum (strain R).